Reading from the N-terminus, the 837-residue chain is Histone acetyltransferase KAT2A (837 aa).

Positions 1 to 99 (MAEPSQAPTP…RKAQVRGLPR (99 aa)) are disordered. Alanine 2 is modified (N-acetylalanine). Positions 7 to 51 (APTPAPAAQPRPLQSPAPAPTPTPAPSPASAPIPTPTPAPAPAPA) are enriched in pro residues. Positions 58 to 74 (TGTGGPGVGSGGAGSGG) are enriched in gly residues. The segment covering 75-87 (DPARPGLSQQQRA) has biased composition (low complexity). The span at 88-99 (SQRKAQVRGLPR) shows a compositional bias: basic residues. Residue serine 307 is modified to Phosphoserine. Residues 407-434 (FSPSMGGGSNSSLSLDSAGAEPMPGEKR) are disordered. Residues 416 to 425 (NSSLSLDSAG) are compositionally biased toward low complexity. Residues 503-656 (VIGNSLTPKA…GATLMECELN (154 aa)) form the N-acetyltransferase domain. Lysine 549 is subject to N6-acetyllysine. The active-site Proton donor/acceptor is glutamate 575. Residues 579–581 (CAV), 586–592 (QVKGYGT), and tyrosine 617 contribute to the acetyl-CoA site. Succinyl-CoA-binding positions include 579 to 581 (CAV), 586 to 592 (QVKGYGT), and tyrosine 617. The loop 3 stretch occupies residues 639 to 648 (LGYIKDYEGA). Lysine 728 participates in a covalent cross-link: Glycyl lysine isopeptide (Lys-Gly) (interchain with G-Cter in SUMO2). In terms of domain architecture, Bromo spans 728 to 832 (KDPDQLYTTL…KFFYFKLKEG (105 aa)). At threonine 735 the chain carries Phosphothreonine. Residues lysine 759 and lysine 791 each participate in a glycyl lysine isopeptide (Lys-Gly) (interchain with G-Cter in SUMO2) cross-link.

It belongs to the acetyltransferase family. GCN5 subfamily. As to quaternary structure, homooligomer; may form a tetramer of homodimers. Interacts with EP300, CREBBP and ADA2. Component of the TFTC-HAT complex, at least composed of TAF5L, TAF6L, TAF3, TADA3L, SUPT3H/SPT3, TAF2/TAFII150, TAF4/TAFII135, TAF5/TAFII100, KAT2A/GCN5L2, TAF10 and TRRAP. Component of the STAGA transcription coactivator-HAT complex, at least composed of SUPT3H, KAT2A, SUPT7L, TAF5L, TAF6L, TADA3L, TAD1L, TAF10, TAF12, TRRAP and TAF9. The STAGA core complex is associated with a subcomplex required for histone deubiquitination composed of ATXN7L3, ENY2 and USP22. Component of the ADA2A-containing complex (ATAC), composed of KAT14, KAT2A, TADA2L, TADA3L, ZZ3, MBIP, WDR5, YEATS2, CCDC101 and DR1. In the complex, it probably interacts directly with KAT14, MBIP and WDR5. Interacts with PML. Interacts with CEBPB. Interacts with TACC1, TACC2 and TACC3. Interacts with RELA. Interacts with NFATC2. Interacts with TBX5. Interacts with PLK4. Associates with the 2-oxoglutarate dehydrogenase complex. Interacts with XPC; leading to KAT2A recruitment to promoters and subsequent acetylation of histones. Interacts with ERCC3/XPB; leading to KAT2A recruitment to promoters and subsequent acetylation of histones. Interacts with ISL1. Interactions of ISL1 with MLIP1 or KAT2A may be mutually exclusive. In terms of assembly, (Microbial infection) Interacts with and acetylates HIV-1 Tat. In terms of processing, acetylated at Lys-549, inhibiting the protein acetyltransferase activity. Deacetylation at Lys-549 by SIRT6 promotes phosphorylation at Ser-307 and Thr-735 and subsequent activation of the protein acetyltransferase activity, leading to acetylation and inactivation of PPARGC1A. Expressed in all tissues tested.

It is found in the nucleus. Its subcellular location is the chromosome. It localises to the cytoplasm. The protein resides in the cytoskeleton. The protein localises to the microtubule organizing center. It is found in the centrosome. It catalyses the reaction L-lysyl-[histone] + acetyl-CoA = N(6)-acetyl-L-lysyl-[histone] + CoA + H(+). It carries out the reaction L-lysyl-[protein] + acetyl-CoA = N(6)-acetyl-L-lysyl-[protein] + CoA + H(+). The enzyme catalyses succinyl-CoA + L-lysyl-[protein] = N(6)-succinyl-L-lysyl-[protein] + CoA + H(+). The catalysed reaction is glutaryl-CoA + L-lysyl-[protein] = N(6)-glutaryl-L-lysyl-[protein] + CoA + H(+). In terms of biological role, protein lysine acyltransferase that can act as a acetyltransferase, glutaryltransferase, succinyltransferase or malonyltransferase, depending on the context. Acts as a histone lysine succinyltransferase: catalyzes succinylation of histone H3 on 'Lys-79' (H3K79succ), with a maximum frequency around the transcription start sites of genes. Succinylation of histones gives a specific tag for epigenetic transcription activation. Association with the 2-oxoglutarate dehydrogenase complex, which provides succinyl-CoA, is required for histone succinylation. In different complexes, functions either as an acetyltransferase (HAT) or as a succinyltransferase: in the SAGA and ATAC complexes, acts as a histone acetyltransferase. Has significant histone acetyltransferase activity with core histones, but not with nucleosome core particles. Has a a strong preference for acetylation of H3 at 'Lys-9' (H3K9ac). Acetylation of histones gives a specific tag for epigenetic transcription activation. Recruited by the XPC complex at promoters, where it specifically mediates acetylation of histone variant H2A.Z.1/H2A.Z, thereby promoting expression of target genes. Involved in long-term memory consolidation and synaptic plasticity: acts by promoting expression of a hippocampal gene expression network linked to neuroactive receptor signaling. Acts as a positive regulator of T-cell activation: upon TCR stimulation, recruited to the IL2 promoter following interaction with NFATC2 and catalyzes acetylation of histone H3 at 'Lys-9' (H3K9ac), leading to promote IL2 expression. Required for growth and differentiation of craniofacial cartilage and bone by regulating acetylation of histone H3 at 'Lys-9' (H3K9ac). Regulates embryonic stem cell (ESC) pluripotency and differentiation. Also acetylates non-histone proteins, such as CEBPB, MRE11, PPARGC1A, PLK4 and TBX5. Involved in heart and limb development by mediating acetylation of TBX5, acetylation regulating nucleocytoplasmic shuttling of TBX5. Acts as a negative regulator of centrosome amplification by mediating acetylation of PLK4. Acts as a negative regulator of gluconeogenesis by mediating acetylation and subsequent inactivation of PPARGC1A. Also acts as a histone glutaryltransferase: catalyzes glutarylation of histone H4 on 'Lys-91' (H4K91glu), a mark that destabilizes nucleosomes by promoting dissociation of the H2A-H2B dimers from nucleosomes. (Microbial infection) In case of HIV-1 infection, it is recruited by the viral protein Tat. Regulates Tat's transactivating activity and may help inducing chromatin remodeling of proviral genes. In Homo sapiens (Human), this protein is Histone acetyltransferase KAT2A.